A 466-amino-acid polypeptide reads, in one-letter code: Probable Xaa-Pro aminopeptidase pepP (466 aa).

The Mn(2+) site is built by Asp264, Asp275, Glu398, and Glu438.

Belongs to the peptidase M24B family. Requires Mn(2+) as cofactor.

It catalyses the reaction Release of any N-terminal amino acid, including proline, that is linked to proline, even from a dipeptide or tripeptide.. In terms of biological role, catalyzes the removal of a penultimate prolyl residue from the N-termini of peptides. This is Probable Xaa-Pro aminopeptidase pepP (pepP) from Aspergillus terreus (strain NIH 2624 / FGSC A1156).